The sequence spans 33 residues: Beta/kappa-theraphotoxin-Hlv1a (33 aa).

3 disulfides stabilise this stretch: Cys2–Cys17, Cys9–Cys22, and Cys16–Cys29. Ile33 is subject to Isoleucine amide.

This sequence belongs to the neurotoxin 10 (Hwtx-1) family. 11 (haplotoxin-2) subfamily. In terms of tissue distribution, expressed by the venom gland.

It is found in the secreted. Functionally, spider venom neurotoxin that blocks voltage-gated sodium channel Nav1.3/SCN3A in human (IC(50)=80 nM) and rat (IC(50)=160 nM). Partially inhibits human Kv11.1/KCNH2/ERG (25% at 175 uM). The polypeptide is Beta/kappa-theraphotoxin-Hlv1a (Cyriopagopus lividus (Cobalt blue tarantula)).